A 204-amino-acid polypeptide reads, in one-letter code: UPF0637 protein SAB0972c (204 aa).

The protein belongs to the UPF0637 family.

The protein is UPF0637 protein SAB0972c of Staphylococcus aureus (strain bovine RF122 / ET3-1).